The chain runs to 241 residues: UDP-2,3-diacylglucosamine hydrolase (241 aa).

Mn(2+)-binding residues include Asp-8, His-10, Asp-41, Asn-79, and His-114. 79-80 contacts substrate; that stretch reads NR. 4 residues coordinate substrate: Asp-122, Lys-164, Lys-167, and His-195. Mn(2+) is bound by residues His-195 and His-197.

The protein belongs to the LpxH family. Mn(2+) serves as cofactor.

It is found in the cell inner membrane. It catalyses the reaction UDP-2-N,3-O-bis[(3R)-3-hydroxytetradecanoyl]-alpha-D-glucosamine + H2O = 2-N,3-O-bis[(3R)-3-hydroxytetradecanoyl]-alpha-D-glucosaminyl 1-phosphate + UMP + 2 H(+). It functions in the pathway glycolipid biosynthesis; lipid IV(A) biosynthesis; lipid IV(A) from (3R)-3-hydroxytetradecanoyl-[acyl-carrier-protein] and UDP-N-acetyl-alpha-D-glucosamine: step 4/6. In terms of biological role, hydrolyzes the pyrophosphate bond of UDP-2,3-diacylglucosamine to yield 2,3-diacylglucosamine 1-phosphate (lipid X) and UMP by catalyzing the attack of water at the alpha-P atom. Involved in the biosynthesis of lipid A, a phosphorylated glycolipid that anchors the lipopolysaccharide to the outer membrane of the cell. The chain is UDP-2,3-diacylglucosamine hydrolase from Aliivibrio fischeri (strain MJ11) (Vibrio fischeri).